A 377-amino-acid polypeptide reads, in one-letter code: 3-dehydroquinate synthase (377 aa).

Residues 113–117 (GVIGD), 137–138 (TT), lysine 150, lysine 159, and 177–180 (FLDT) contribute to the NAD(+) site. Residues glutamate 192, histidine 254, and histidine 273 each coordinate Zn(2+).

Belongs to the sugar phosphate cyclases superfamily. Dehydroquinate synthase family. Requires Co(2+) as cofactor. The cofactor is Zn(2+). NAD(+) is required as a cofactor.

It localises to the cytoplasm. The catalysed reaction is 7-phospho-2-dehydro-3-deoxy-D-arabino-heptonate = 3-dehydroquinate + phosphate. Its pathway is metabolic intermediate biosynthesis; chorismate biosynthesis; chorismate from D-erythrose 4-phosphate and phosphoenolpyruvate: step 2/7. Functionally, catalyzes the conversion of 3-deoxy-D-arabino-heptulosonate 7-phosphate (DAHP) to dehydroquinate (DHQ). In Bartonella quintana (strain Toulouse) (Rochalimaea quintana), this protein is 3-dehydroquinate synthase.